Reading from the N-terminus, the 356-residue chain is 3-dehydroquinate synthase (356 aa).

NAD(+) contacts are provided by residues 69–74, 103–107, 127–128, Lys140, Lys149, and 167–170; these read DGEKFK, GVIGD, TT, and CLKT. Residues Glu182, His245, and His262 each coordinate Zn(2+).

The protein belongs to the sugar phosphate cyclases superfamily. Dehydroquinate synthase family. It depends on Co(2+) as a cofactor. The cofactor is Zn(2+). Requires NAD(+) as cofactor.

The protein localises to the cytoplasm. It catalyses the reaction 7-phospho-2-dehydro-3-deoxy-D-arabino-heptonate = 3-dehydroquinate + phosphate. It participates in metabolic intermediate biosynthesis; chorismate biosynthesis; chorismate from D-erythrose 4-phosphate and phosphoenolpyruvate: step 2/7. Its function is as follows. Catalyzes the conversion of 3-deoxy-D-arabino-heptulosonate 7-phosphate (DAHP) to dehydroquinate (DHQ). The sequence is that of 3-dehydroquinate synthase from Psychromonas ingrahamii (strain DSM 17664 / CCUG 51855 / 37).